Here is a 448-residue protein sequence, read N- to C-terminus: MAGAGPAPGLPGAGGPVVPGPGAGIPGKSGEERLKEMEAEMALFEQEVLGAPVTGIPTAVPAVPTVPTVEAMQVPAAPVIRPIIATNTYQQVQQTLEARAAAAATVVPPMVGGPPFVGPVGFGPGDRSHLDSPEAREAMFLRRAAAGPRPMALRPPHQALVGPPLPGPPGPPMMLPPMARAPGPPLGSMAALRPPLEEPATPRELGLGLGLGLKEKEEAVVAAAAGLEEASAVVAVGAGGAPAGPAVIGPSLPLALAMPLPEPEPLPLPLEVVRGLLPPLRIPELLSLRPRPRPPRPEPPPGLMALEVPEPLSEDKKKGKPEKLKRCIRTAAGSSWEDPSLLEWDADDFRIFCGDLGNEVNDDILARAFSRFPSFLKAKVIRDKRTGKTKGYGFVSFKDPSDYVRAMREMNGKYVGSRPIKLRKSMWKDRNLDVVRKKQKEKKKLGLR.

The disordered stretch occupies residues Met-1–Ser-29. The residue at position 2 (Ala-2) is an N-acetylalanine. Over residues Pro-11–Gly-27 the composition is skewed to gly residues. The residue at position 132 (Ser-132) is a Phosphoserine. Asymmetric dimethylarginine is present on Arg-149. The segment at Glu-204 to Arg-448 is necessary for interaction with HNRNPK. Residues Leu-286 to Leu-324 are disordered. Positions Ser-313–Leu-324 are enriched in basic and acidic residues. In terms of domain architecture, RRM spans Phe-349–Trp-427.

It belongs to the RRM RBM42 family. Interacts with HNRNPK.

The protein localises to the nucleus. It localises to the cytoplasm. Binds (via the RRM domain) to the 3'-untranslated region (UTR) of CDKN1A mRNA. The polypeptide is RNA-binding protein 42 (RBM42) (Bos taurus (Bovine)).